A 449-amino-acid polypeptide reads, in one-letter code: Glucose-6-phosphate isomerase (449 aa).

Catalysis depends on glutamate 291, which acts as the Proton donor. Residues histidine 312 and lysine 426 contribute to the active site.

This sequence belongs to the GPI family.

It is found in the cytoplasm. It carries out the reaction alpha-D-glucose 6-phosphate = beta-D-fructose 6-phosphate. The protein operates within carbohydrate biosynthesis; gluconeogenesis. It participates in carbohydrate degradation; glycolysis; D-glyceraldehyde 3-phosphate and glycerone phosphate from D-glucose: step 2/4. Catalyzes the reversible isomerization of glucose-6-phosphate to fructose-6-phosphate. The chain is Glucose-6-phosphate isomerase from Streptococcus pyogenes serotype M28 (strain MGAS6180).